A 180-amino-acid chain; its full sequence is Large ribosomal subunit protein uL5 (180 aa).

It belongs to the universal ribosomal protein uL5 family. As to quaternary structure, part of the 50S ribosomal subunit; part of the 5S rRNA/L5/L18/L25 subcomplex. Contacts the 5S rRNA and the P site tRNA. Forms a bridge to the 30S subunit in the 70S ribosome.

This is one of the proteins that bind and probably mediate the attachment of the 5S RNA into the large ribosomal subunit, where it forms part of the central protuberance. In the 70S ribosome it contacts protein S13 of the 30S subunit (bridge B1b), connecting the 2 subunits; this bridge is implicated in subunit movement. Contacts the P site tRNA; the 5S rRNA and some of its associated proteins might help stabilize positioning of ribosome-bound tRNAs. The polypeptide is Large ribosomal subunit protein uL5 (Chlamydia caviae (strain ATCC VR-813 / DSM 19441 / 03DC25 / GPIC) (Chlamydophila caviae)).